A 260-amino-acid polypeptide reads, in one-letter code: Acetylglutamate kinase (260 aa).

Substrate is bound by residues 45–46, arginine 67, and asparagine 159; that span reads GG.

This sequence belongs to the acetylglutamate kinase family. ArgB subfamily.

Its subcellular location is the cytoplasm. The catalysed reaction is N-acetyl-L-glutamate + ATP = N-acetyl-L-glutamyl 5-phosphate + ADP. It functions in the pathway amino-acid biosynthesis; L-arginine biosynthesis; N(2)-acetyl-L-ornithine from L-glutamate: step 2/4. Functionally, catalyzes the ATP-dependent phosphorylation of N-acetyl-L-glutamate. The sequence is that of Acetylglutamate kinase from Colwellia psychrerythraea (strain 34H / ATCC BAA-681) (Vibrio psychroerythus).